A 467-amino-acid chain; its full sequence is 3-isopropylmalate dehydratase large subunit (467 aa).

3 residues coordinate [4Fe-4S] cluster: C347, C407, and C410.

This sequence belongs to the aconitase/IPM isomerase family. LeuC type 1 subfamily. As to quaternary structure, heterodimer of LeuC and LeuD. [4Fe-4S] cluster is required as a cofactor.

It carries out the reaction (2R,3S)-3-isopropylmalate = (2S)-2-isopropylmalate. It participates in amino-acid biosynthesis; L-leucine biosynthesis; L-leucine from 3-methyl-2-oxobutanoate: step 2/4. Catalyzes the isomerization between 2-isopropylmalate and 3-isopropylmalate, via the formation of 2-isopropylmaleate. This is 3-isopropylmalate dehydratase large subunit from Nostoc sp. (strain PCC 7120 / SAG 25.82 / UTEX 2576).